Consider the following 131-residue polypeptide: Profilin-1 (131 aa).

This sequence belongs to the profilin family. As to quaternary structure, occurs in many kinds of cells as a complex with monomeric actin in a 1:1 ratio.

The protein resides in the cytoplasm. It is found in the cytoskeleton. Binds to actin and affects the structure of the cytoskeleton. At high concentrations, profilin prevents the polymerization of actin, whereas it enhances it at low concentrations. By binding to PIP2, it inhibits the formation of IP3 and DG. In Ricinus communis (Castor bean), this protein is Profilin-1 (PRO1).